Here is a 221-residue protein sequence, read N- to C-terminus: 7-cyano-7-deazaguanine synthase (221 aa).

Position 10–20 (10–20) interacts with ATP; it reads FSGGQDSTTCL. Zn(2+)-binding residues include Cys187, Cys196, Cys199, and Cys202.

The protein belongs to the QueC family. Homodimer. Zn(2+) is required as a cofactor.

It carries out the reaction 7-carboxy-7-deazaguanine + NH4(+) + ATP = 7-cyano-7-deazaguanine + ADP + phosphate + H2O + H(+). The protein operates within purine metabolism; 7-cyano-7-deazaguanine biosynthesis. In terms of biological role, catalyzes the ATP-dependent conversion of 7-carboxy-7-deazaguanine (CDG) to 7-cyano-7-deazaguanine (preQ(0)). This chain is 7-cyano-7-deazaguanine synthase, found in Shouchella clausii (strain KSM-K16) (Alkalihalobacillus clausii).